A 641-amino-acid chain; its full sequence is 1-deoxy-D-xylulose-5-phosphate synthase (641 aa).

Thiamine diphosphate-binding positions include His79 and 120 to 122 (AHS). Asp151 contributes to the Mg(2+) binding site. Thiamine diphosphate contacts are provided by residues 152 to 153 (GS), Asn180, Tyr290, and Glu372. Residue Asn180 participates in Mg(2+) binding.

The protein belongs to the transketolase family. DXPS subfamily. In terms of assembly, homodimer. Mg(2+) is required as a cofactor. Requires thiamine diphosphate as cofactor.

It carries out the reaction D-glyceraldehyde 3-phosphate + pyruvate + H(+) = 1-deoxy-D-xylulose 5-phosphate + CO2. It participates in metabolic intermediate biosynthesis; 1-deoxy-D-xylulose 5-phosphate biosynthesis; 1-deoxy-D-xylulose 5-phosphate from D-glyceraldehyde 3-phosphate and pyruvate: step 1/1. Catalyzes the acyloin condensation reaction between C atoms 2 and 3 of pyruvate and glyceraldehyde 3-phosphate to yield 1-deoxy-D-xylulose-5-phosphate (DXP). This Rhodopseudomonas palustris (strain BisB18) protein is 1-deoxy-D-xylulose-5-phosphate synthase.